A 158-amino-acid chain; its full sequence is Aspartate carbamoyltransferase regulatory chain (158 aa).

Residues cysteine 111, cysteine 116, cysteine 140, and cysteine 143 each coordinate Zn(2+).

Belongs to the PyrI family. In terms of assembly, contains catalytic and regulatory chains. Requires Zn(2+) as cofactor.

In terms of biological role, involved in allosteric regulation of aspartate carbamoyltransferase. The protein is Aspartate carbamoyltransferase regulatory chain of Metallosphaera sedula (strain ATCC 51363 / DSM 5348 / JCM 9185 / NBRC 15509 / TH2).